A 606-amino-acid polypeptide reads, in one-letter code: Scavenger receptor class A member 3 (606 aa).

The Cytoplasmic portion of the chain corresponds to 1-56 (MKVRSAGGDGDALCVTEEDLAGDDEDMPTFPCTQKGRPGPRCSRCQKNLSLHTSVR). Residues 57 to 77 (ILYLFLALLLVAVAVLASLVF) form a helical; Signal-anchor for type II membrane protein membrane-spanning segment. The Extracellular segment spans residues 78 to 606 (RKVDSLSEDI…PGPPGSQSFY (529 aa)). N-linked (GlcNAc...) asparagine glycans are attached at residues asparagine 115, asparagine 182, asparagine 224, asparagine 257, asparagine 313, asparagine 337, asparagine 365, asparagine 400, asparagine 430, and asparagine 451. The segment at 454–606 (ILRGAPGPPG…PGPPGSQSFY (153 aa)) is disordered. The region spanning 455-513 (LRGAPGPPGPRGFKGDMGVKGPVGGRGPKGDPGSLGPLGPQGPQGQPGEAGPVGERGPV) is the Collagen-like 1 domain. Low complexity predominate over residues 485–519 (DPGSLGPLGPQGPQGQPGEAGPVGERGPVGPRGFP). The span at 526 to 535 (GSFGTGGPRG) shows a compositional bias: gly residues. Residues 544–603 (GPPGPEGPPGSPGPSGPQGKPGIAGKTGSPGQRGAMGPKGEPGIQGPPGLPGPPGPPGSQ) form the Collagen-like 2 domain. 2 stretches are compositionally biased toward pro residues: residues 545–558 (PPGP…PGPS) and 591–600 (PGLPGPPGPP).

Expressed ubiquitously.

It is found in the endoplasmic reticulum membrane. It localises to the golgi apparatus membrane. Its function is as follows. Seems to protect cells by scavenging oxidative molecules or harmful products of oxidation. The sequence is that of Scavenger receptor class A member 3 (SCARA3) from Homo sapiens (Human).